The following is a 296-amino-acid chain: Nucleotide-binding protein RSc0403 (296 aa).

8–15 (GMSGSGKS) contacts ATP. Residue 57-60 (DIRS) coordinates GTP. Positions 99-124 (TRRRHPLSIRNGRPDAGNPPSAAKGP) are disordered.

This sequence belongs to the RapZ-like family.

Its function is as follows. Displays ATPase and GTPase activities. The sequence is that of Nucleotide-binding protein RSc0403 from Ralstonia nicotianae (strain ATCC BAA-1114 / GMI1000) (Ralstonia solanacearum).